The sequence spans 158 residues: NAD(P)H-quinone oxidoreductase subunit N (158 aa).

Belongs to the complex I NdhN subunit family. NDH-1 can be composed of about 15 different subunits; different subcomplexes with different compositions have been identified which probably have different functions.

It is found in the cellular thylakoid membrane. It carries out the reaction a plastoquinone + NADH + (n+1) H(+)(in) = a plastoquinol + NAD(+) + n H(+)(out). The enzyme catalyses a plastoquinone + NADPH + (n+1) H(+)(in) = a plastoquinol + NADP(+) + n H(+)(out). NDH-1 shuttles electrons from an unknown electron donor, via FMN and iron-sulfur (Fe-S) centers, to quinones in the respiratory and/or the photosynthetic chain. The immediate electron acceptor for the enzyme in this species is believed to be plastoquinone. Couples the redox reaction to proton translocation, and thus conserves the redox energy in a proton gradient. Cyanobacterial NDH-1 also plays a role in inorganic carbon-concentration. In Rippkaea orientalis (strain PCC 8801 / RF-1) (Cyanothece sp. (strain PCC 8801)), this protein is NAD(P)H-quinone oxidoreductase subunit N.